A 285-amino-acid chain; its full sequence is Single myb histone 3 (285 aa).

The tract at residues 1-35 is disordered; the sequence is MGAPKQKWTSEEEDALRRGVRKHGAGKWRTIQKDP. The 60-residue stretch at 1 to 60 folds into the HTH myb-type domain; the sequence is MGAPKQKWTSEEEDALRRGVRKHGAGKWRTIQKDPQFSPILSSRSNIDLKDKWRNLSFSA. The segment at residues 28–56 is a DNA-binding region (H-T-H motif); that stretch reads WRTIQKDPQFSPILSSRSNIDLKDKWRNL. The region spanning 113–181 is the H15 domain; that stretch reads TPPKYGAMIM…KVDNFYRLPD (69 aa). Positions 226–255 form a coiled coil; sequence VKVTDAEAKAHDAHDQMMEAERMLKMAEDT.

Belongs to the histone H1/H5 family. SMH subfamily. As to quaternary structure, forms a homodimer and heterodimers.

It localises to the nucleus. The protein resides in the chromosome. Its subcellular location is the nucleolus. It is found in the telomere. Binds preferentially double-stranded telomeric repeats, but may also bind to the single telomeric strand. The polypeptide is Single myb histone 3 (SMH3) (Zea mays (Maize)).